The following is a 373-amino-acid chain: Probable G-protein coupled receptor 173 (373 aa).

The Extracellular portion of the chain corresponds to 1-26 (MANTTGEPEEVSGALSPPSASAYVKL). N3 carries N-linked (GlcNAc...) asparagine glycosylation. Residues 27 to 47 (VLLGLIMCVSLAGNAILSLLV) form a helical membrane-spanning segment. Topologically, residues 48–59 (LKERALHKAPYY) are cytoplasmic. A helical transmembrane segment spans residues 60 to 80 (FLLDLCLADGIRSAVCFPFVL). The Extracellular segment spans residues 81–97 (ASVRHGSSWTFSALSCK). C96 and C174 are oxidised to a cystine. The chain crosses the membrane as a helical span at residues 98–118 (IVAFMAVLFCFHAAFMLFCIS). Residues 119-139 (VTRYMAIAHHRFYAKRMTLWT) are Cytoplasmic-facing. The helical transmembrane segment at 140-160 (CAAVICMAWTLSVAMAFPPVF) threads the bilayer. Over 161 to 188 (DVGTYKFIREEDQCIFEHRYFKANDTLG) the chain is Extracellular. A glycan (N-linked (GlcNAc...) asparagine) is linked at N184. Residues 189–209 (FMLMLAVLMAATHAVYGKLLL) traverse the membrane as a helical segment. Topologically, residues 210-287 (FEYRHRKMKP…VKGEKQLGRM (78 aa)) are cytoplasmic. The chain crosses the membrane as a helical span at residues 288-308 (FYAITLLFLLLWSPYIVACYW). Over 309 to 322 (RVFVKACAVPHRYL) the chain is Extracellular. The chain crosses the membrane as a helical span at residues 323-343 (ATAVWMSFAQAAVNPIVCFLL). At 344 to 373 (NKDLKKCLRTHAPCWGTGGAPAPREPYCVM) the chain is on the cytoplasmic side.

The protein belongs to the G-protein coupled receptor 1 family. Expressed in the ovary, specifically in granulosa cells of follicles that have passed the primary stage and in oocytes (at protein level). Expressed at high levels in brain. Lower levels in small intestine. In brain regions, detected in all regions tested. Highest levels in the cerebellum and cerebral cortex.

Its subcellular location is the cell membrane. In terms of biological role, is a receptor for the SMIM20 derived peptides Phoenixin-14 and Phoenixin-20. It mediates the Phoenixin-14 and Phoenixin-20 augmentation of gonadotropin-releasing hormone (GNRH) signaling in the hypothalamus and pituitary gland. In the ovary, it mediates the effects of Phoenixin-14 and Phoenixin-20 induced granulosa cell proliferation during follicular growth. In Homo sapiens (Human), this protein is Probable G-protein coupled receptor 173 (GPR173).